Reading from the N-terminus, the 122-residue chain is MRKKSSTPNRGFRVADQIQRDLTELIARELKDPRVGMVTIQAVEVTPDYAHAKVFFSVLVGDPKACEEALNQAAGFLRNGLFKRLMTHTVPTLHFHFDRTTERAADMNALIAKAVSSRAKDD.

Belongs to the RbfA family. As to quaternary structure, monomer. Binds 30S ribosomal subunits, but not 50S ribosomal subunits or 70S ribosomes.

It is found in the cytoplasm. Its function is as follows. One of several proteins that assist in the late maturation steps of the functional core of the 30S ribosomal subunit. Associates with free 30S ribosomal subunits (but not with 30S subunits that are part of 70S ribosomes or polysomes). Required for efficient processing of 16S rRNA. May interact with the 5'-terminal helix region of 16S rRNA. In Polaromonas sp. (strain JS666 / ATCC BAA-500), this protein is Ribosome-binding factor A.